The primary structure comprises 210 residues: Large ribosomal subunit protein uL4 (210 aa).

Positions 46–89 (QGTASTLTRSEVRGGGRKPYKQKGTGRARQGSIRTPLRPGGGII) are disordered. The span at 60 to 71 (GGRKPYKQKGTG) shows a compositional bias: basic residues.

The protein belongs to the universal ribosomal protein uL4 family. Part of the 50S ribosomal subunit.

In terms of biological role, one of the primary rRNA binding proteins, this protein initially binds near the 5'-end of the 23S rRNA. It is important during the early stages of 50S assembly. It makes multiple contacts with different domains of the 23S rRNA in the assembled 50S subunit and ribosome. Functionally, forms part of the polypeptide exit tunnel. This chain is Large ribosomal subunit protein uL4, found in Prochlorococcus marinus (strain MIT 9312).